The primary structure comprises 292 residues: MGTLSLSSSLKPSLVSSRLNSSSSASSSSFPKPNNLYLKPTKLISPPLRTTSPSPLRFANASIEMSQTQESAIRGAESDVMGLLLRERIVFLGSSIDDFVADAIMSQLLLLDAKDPKKDIKLFINSPGGSLSATMAIYDVVQLVRADVSTIALGIAASTASIILGAGTKGKRFAMPNTRIMIHQPLGGASGQAIDVEIQAKEVMHNKNNVTSIIAGCTSRSFEQVLKDIDRDRYMSPIEAVEYGLIDGVIDGDSIIPLEPVPDRVKPRVNYEEISKDPMKFLTPEIPDDEIY.

Residues 1–65 constitute a chloroplast transit peptide; the sequence is MGTLSLSSSL…LRFANASIEM (65 aa). An N-acetylserine modification is found at Ser-66. Catalysis depends on Ser-158, which acts as the Nucleophile. His-183 is an active-site residue.

This sequence belongs to the peptidase S14 family. Component of the chloroplastic Clp protease core complex which consist of at least 16 proteins: CLPP4 (3 copies), CLPP5 (3 copies), CLPR4 (2 copies), ClpP1 (1 copy), CLPP6 (1 copy), CLPR2 (1 copy), CLPT1 (1 copy), CLPT2 (1 copy) and 3 copies of CLPP3 and/or CLPR1 and/or CLPR3. Interacts with CHIP. The core complex is organized in two heptameric rings, one containing CLPP3,4,5,6 in a 1:2:3:1 ratio and the other CLPP1 and CLPR1,2,3,4 in a 3:1:1:1:1 ratio. Ubiquitinated by CHIP. As to expression, mostly expressed in leaves. Also detected in stems, and to a lower extent, in roots (at protein level).

Its subcellular location is the plastid. The protein resides in the chloroplast stroma. The catalysed reaction is Hydrolysis of proteins to small peptides in the presence of ATP and magnesium. alpha-casein is the usual test substrate. In the absence of ATP, only oligopeptides shorter than five residues are hydrolyzed (such as succinyl-Leu-Tyr-|-NHMec, and Leu-Tyr-Leu-|-Tyr-Trp, in which cleavage of the -Tyr-|-Leu- and -Tyr-|-Trp bonds also occurs).. Functionally, cleaves peptides in various proteins in a process that requires ATP hydrolysis. Has a chymotrypsin-like activity. Plays a major role in the degradation of misfolded proteins. Essential protein required for chloroplast development and integrity. Essential for Embryogenesis. The protein is ATP-dependent Clp protease proteolytic subunit 4, chloroplastic of Arabidopsis thaliana (Mouse-ear cress).